A 311-amino-acid chain; its full sequence is Methionyl-tRNA formyltransferase (311 aa).

110–113 contacts (6S)-5,6,7,8-tetrahydrofolate; sequence SLLP.

It belongs to the Fmt family.

It catalyses the reaction L-methionyl-tRNA(fMet) + (6R)-10-formyltetrahydrofolate = N-formyl-L-methionyl-tRNA(fMet) + (6S)-5,6,7,8-tetrahydrofolate + H(+). Attaches a formyl group to the free amino group of methionyl-tRNA(fMet). The formyl group appears to play a dual role in the initiator identity of N-formylmethionyl-tRNA by promoting its recognition by IF2 and preventing the misappropriation of this tRNA by the elongation apparatus. This Streptococcus pneumoniae (strain Taiwan19F-14) protein is Methionyl-tRNA formyltransferase.